Consider the following 198-residue polypeptide: Molybdopterin synthase catalytic subunit (198 aa).

Over residues 1–27 (MASQPPQEPTPTATSTPSTSALASLPP) the composition is skewed to low complexity. A disordered region spans residues 1-40 (MASQPPQEPTPTATSTPSTSALASLPPHLDPTTYPRTLTS). Residues 143–144 (HR), lysine 159, and 166–168 (KRE) each bind substrate. The disordered stretch occupies residues 176–198 (EWRENRERDAEGKVVAEKQEERE).

This sequence belongs to the MoaE family. MOCS2B subfamily. As to quaternary structure, heterotetramer; composed of 2 small (MOCS2A) and 2 large (MOCS2B) subunits.

The protein localises to the cytoplasm. The enzyme catalyses 2 [molybdopterin-synthase sulfur-carrier protein]-C-terminal-Gly-aminoethanethioate + cyclic pyranopterin phosphate + H2O = molybdopterin + 2 [molybdopterin-synthase sulfur-carrier protein]-C-terminal Gly-Gly + 2 H(+). It participates in cofactor biosynthesis; molybdopterin biosynthesis. Catalytic subunit of the molybdopterin synthase complex, a complex that catalyzes the conversion of precursor Z into molybdopterin. Acts by mediating the incorporation of 2 sulfur atoms from thiocarboxylated MOCS2A into precursor Z to generate a dithiolene group. The chain is Molybdopterin synthase catalytic subunit from Aspergillus clavatus (strain ATCC 1007 / CBS 513.65 / DSM 816 / NCTC 3887 / NRRL 1 / QM 1276 / 107).